Here is a 229-residue protein sequence, read N- to C-terminus: Cytochrome c oxidase subunit 2 (229 aa).

Residues 1–26 (MATWMNINLQDANSSTMEQLTMFHDH) lie on the Mitochondrial intermembrane side of the membrane. A helical membrane pass occupies residues 27–48 (TLMILTMITSIVTFIMVSMTTN). The Mitochondrial matrix segment spans residues 49-62 (TLINRYLLEGQTIE). Residues 63 to 82 (FIWTTIPAITLIFIALPSLH) form a helical membrane-spanning segment. At 83–229 (LLYLIDEINN…LKWINKSLSS (147 aa)) the chain is on the mitochondrial intermembrane side. His161, Cys196, Glu198, Cys200, His204, and Met207 together coordinate Cu cation. Residue Glu198 participates in Mg(2+) binding.

It belongs to the cytochrome c oxidase subunit 2 family. Component of the cytochrome c oxidase (complex IV, CIV), a multisubunit enzyme composed of a catalytic core of 3 subunits and several supernumerary subunits. The complex exists as a monomer or a dimer and forms supercomplexes (SCs) in the inner mitochondrial membrane with ubiquinol-cytochrome c oxidoreductase (cytochrome b-c1 complex, complex III, CIII). The cofactor is Cu cation.

It localises to the mitochondrion inner membrane. The catalysed reaction is 4 Fe(II)-[cytochrome c] + O2 + 8 H(+)(in) = 4 Fe(III)-[cytochrome c] + 2 H2O + 4 H(+)(out). In terms of biological role, component of the cytochrome c oxidase, the last enzyme in the mitochondrial electron transport chain which drives oxidative phosphorylation. The respiratory chain contains 3 multisubunit complexes succinate dehydrogenase (complex II, CII), ubiquinol-cytochrome c oxidoreductase (cytochrome b-c1 complex, complex III, CIII) and cytochrome c oxidase (complex IV, CIV), that cooperate to transfer electrons derived from NADH and succinate to molecular oxygen, creating an electrochemical gradient over the inner membrane that drives transmembrane transport and the ATP synthase. Cytochrome c oxidase is the component of the respiratory chain that catalyzes the reduction of oxygen to water. Electrons originating from reduced cytochrome c in the intermembrane space (IMS) are transferred via the dinuclear copper A center (CU(A)) of subunit 2 and heme A of subunit 1 to the active site in subunit 1, a binuclear center (BNC) formed by heme A3 and copper B (CU(B)). The BNC reduces molecular oxygen to 2 water molecules using 4 electrons from cytochrome c in the IMS and 4 protons from the mitochondrial matrix. The sequence is that of Cytochrome c oxidase subunit 2 (COII) from Oncopeltus fasciatus (Large milkweed bug).